The following is a 503-amino-acid chain: Activin receptor type-1-like (503 aa).

The signal sequence occupies residues 1–21 (MTLGSPRKGLLMLLMALVTQG). The Extracellular portion of the chain corresponds to 22–118 (DPVKPSRGPL…PSEQPGTDGQ (97 aa)). Intrachain disulfides connect cysteine 34–cysteine 51, cysteine 36–cysteine 41, and cysteine 46–cysteine 69. A mediates specificity for BMP ligand region spans residues 73–76 (HREL). Cystine bridges form between cysteine 77/cysteine 89 and cysteine 90/cysteine 95. A glycan (N-linked (GlcNAc...) asparagine) is linked at asparagine 98. The helical transmembrane segment at 119–141 (LALILGPVLALLALVALGVLGLW) threads the bilayer. Residues 142-503 (HVRRRQEKQR…NSPEKPKVIQ (362 aa)) are Cytoplasmic-facing. Phosphoserine occurs at positions 155, 160, and 161. The 30-residue stretch at 172–201 (SMLGDLLDSDCTTGSGSGLPFLVQRTVARQ) folds into the GS domain. The region spanning 202–492 (VALVECVGKG…LRIKKTLQKI (291 aa)) is the Protein kinase domain. Residues 208-216 (VGKGRYGEV) and lysine 229 each bind ATP. The active-site Proton acceptor is the aspartate 330.

Belongs to the protein kinase superfamily. TKL Ser/Thr protein kinase family. TGFB receptor subfamily. As to quaternary structure, interacts with TSC22D1/TSC-22. Mg(2+) is required as a cofactor. Mn(2+) serves as cofactor.

The protein resides in the cell membrane. It carries out the reaction L-threonyl-[receptor-protein] + ATP = O-phospho-L-threonyl-[receptor-protein] + ADP + H(+). The enzyme catalyses L-seryl-[receptor-protein] + ATP = O-phospho-L-seryl-[receptor-protein] + ADP + H(+). Its function is as follows. Type I receptor for TGF-beta family ligands BMP9/GDF2 and BMP10 and important regulator of normal blood vessel development. On ligand binding, forms a receptor complex consisting of two type II and two type I transmembrane serine/threonine kinases. Type II receptors phosphorylate and activate type I receptors which autophosphorylate, then bind and activate SMAD transcriptional regulators. May bind activin as well. The sequence is that of Activin receptor type-1-like (ACVRL1) from Homo sapiens (Human).